Reading from the N-terminus, the 1035-residue chain is Cell-division control histidine kinase PdhS (1035 aa).

The interval 1-613 is important for polar localization; sequence MSGSYPFIDI…HADGSEEPVD (613 aa). Positions 500–533 are disordered; it reads QGLANTRAESETPVSETSSIEPVEPTPPVKTRSE. The interaction with DivK stretch occupies residues 614–1035; the sequence is AHLNAIAWRG…VFPPTRVLAD (422 aa). Positions 659–730 constitute a PAS domain; the sequence is HVEELKTILD…YLHGLSGNGV (72 aa). Residues 802–1031 enclose the Histidine kinase domain; sequence RISHEIRTPL…VVEIVFPPTR (230 aa). Histidine 805 carries the phosphohistidine; by autocatalysis modification.

Interacts with DivK.

It is found in the cytoplasm. It catalyses the reaction ATP + protein L-histidine = ADP + protein N-phospho-L-histidine.. Functionally, functions as a polar differentiation marker. Essential protein that, by localizing in the old pole of dividing cells, controls cell division and maturation, probably through control of DivK phosphorylation status and cellular distribution, which in turn regulates CtrA, a transcriptional regulator of the minB operon. The asymmetrical localization of this protein is probably required for cells to enter a new division cycle. In Brucella canis (strain ATCC 23365 / NCTC 10854 / RM-666), this protein is Cell-division control histidine kinase PdhS (pdhS).